Reading from the N-terminus, the 431-residue chain is 3-phosphoshikimate 1-carboxyvinyltransferase (431 aa).

The 3-phosphoshikimate site is built by lysine 21, serine 22, and arginine 26. A phosphoenolpyruvate-binding site is contributed by lysine 21. Phosphoenolpyruvate contacts are provided by glycine 93 and arginine 122. The 3-phosphoshikimate site is built by serine 167, glutamine 169, aspartate 318, and lysine 345. Glutamine 169 contacts phosphoenolpyruvate. Aspartate 318 acts as the Proton acceptor in catalysis. 2 residues coordinate phosphoenolpyruvate: arginine 349 and arginine 391.

Belongs to the EPSP synthase family. In terms of assembly, monomer.

It is found in the cytoplasm. The enzyme catalyses 3-phosphoshikimate + phosphoenolpyruvate = 5-O-(1-carboxyvinyl)-3-phosphoshikimate + phosphate. It functions in the pathway metabolic intermediate biosynthesis; chorismate biosynthesis; chorismate from D-erythrose 4-phosphate and phosphoenolpyruvate: step 6/7. Functionally, catalyzes the transfer of the enolpyruvyl moiety of phosphoenolpyruvate (PEP) to the 5-hydroxyl of shikimate-3-phosphate (S3P) to produce enolpyruvyl shikimate-3-phosphate and inorganic phosphate. In Roseiflexus castenholzii (strain DSM 13941 / HLO8), this protein is 3-phosphoshikimate 1-carboxyvinyltransferase.